The following is a 403-amino-acid chain: Phospholipase A1-II 2 (403 aa).

Residue S218 is the Acyl-ester intermediate of the active site. Active-site charge relay system residues include S218, D286, and H323. The interval 381-403 (GPDGRWVLQDHEPDDDDDDDDDD) is disordered. Residues 392-403 (EPDDDDDDDDDD) show a composition bias toward acidic residues.

Belongs to the AB hydrolase superfamily. Lipase family.

The protein resides in the cytoplasm. Its function is as follows. Acylhydrolase that catalyzes the hydrolysis of phospholipids at the sn-1 position. The protein is Phospholipase A1-II 2 of Oryza sativa subsp. indica (Rice).